Reading from the N-terminus, the 78-residue chain is Acyl carrier protein (78 aa).

Positions 2-77 constitute a Carrier domain; the sequence is STIEERVKKI…AAIDYILSHQ (76 aa). An O-(pantetheine 4'-phosphoryl)serine modification is found at Ser37.

The protein belongs to the acyl carrier protein (ACP) family. In terms of processing, 4'-phosphopantetheine is transferred from CoA to a specific serine of apo-ACP by AcpS. This modification is essential for activity because fatty acids are bound in thioester linkage to the sulfhydryl of the prosthetic group.

Its subcellular location is the cytoplasm. It functions in the pathway lipid metabolism; fatty acid biosynthesis. Its function is as follows. Carrier of the growing fatty acid chain in fatty acid biosynthesis. The protein is Acyl carrier protein of Tolumonas auensis (strain DSM 9187 / NBRC 110442 / TA 4).